A 245-amino-acid chain; its full sequence is Ribosomal RNA small subunit methyltransferase G (245 aa).

Residues Gly79, Phe84, 130–131 (AE), and Arg150 each bind S-adenosyl-L-methionine.

This sequence belongs to the methyltransferase superfamily. RNA methyltransferase RsmG family.

The protein resides in the cytoplasm. Its function is as follows. Specifically methylates the N7 position of a guanine in 16S rRNA. This Limosilactobacillus fermentum (strain NBRC 3956 / LMG 18251) (Lactobacillus fermentum) protein is Ribosomal RNA small subunit methyltransferase G.